The primary structure comprises 507 residues: ATP synthase subunit alpha (507 aa).

168-175 (GDRKTGKT) lines the ATP pocket.

It belongs to the ATPase alpha/beta chains family. F-type ATPases have 2 components, CF(1) - the catalytic core - and CF(0) - the membrane proton channel. CF(1) has five subunits: alpha(3), beta(3), gamma(1), delta(1), epsilon(1). CF(0) has three main subunits: a(1), b(2) and c(9-12). The alpha and beta chains form an alternating ring which encloses part of the gamma chain. CF(1) is attached to CF(0) by a central stalk formed by the gamma and epsilon chains, while a peripheral stalk is formed by the delta and b chains.

It localises to the cell inner membrane. The catalysed reaction is ATP + H2O + 4 H(+)(in) = ADP + phosphate + 5 H(+)(out). In terms of biological role, produces ATP from ADP in the presence of a proton gradient across the membrane. The alpha chain is a regulatory subunit. The protein is ATP synthase subunit alpha of Ehrlichia ruminantium (strain Gardel).